We begin with the raw amino-acid sequence, 1887 residues long: ATP-dependent DNA helicase tlh1 (1887 aa).

Positions 329–347 (NQQRREQQDKGENKKRQDD) are enriched in basic and acidic residues. Disordered stretches follow at residues 329 to 372 (NQQR…EEEE), 504 to 552 (ERKE…NTDD), and 1110 to 1135 (MVEGDKEKDKTNEEKNKDEVKAEMTQ). Composition is skewed to acidic residues over residues 360-372 (LEDDEKDNDEEEE) and 524-533 (SAEDDNDNDN). Low complexity predominate over residues 540-549 (NNNNNNNNTN). The span at 1112–1131 (EGDKEKDKTNEEKNKDEVKA) shows a compositional bias: basic and acidic residues. The region spanning 1200 to 1375 (YFSLLNRMNL…RQTFCTNFYV (176 aa)) is the Helicase ATP-binding domain. Residues 1213 to 1220 (LPTGGGKS) and 1240 to 1247 (MNMVTLVL) contribute to the ATP site. A DEAH box motif is present at residues 1322-1325 (DEAH). In terms of domain architecture, Helicase C-terminal spans 1401-1559 (DLRTLMKRTK…CVRSFLASEM (159 aa)). Residues 1613–1643 (YNASFSSSPPPQPGNSSGMSAMNTNTTSTTP) are disordered. A compositionally biased stretch (low complexity) spans 1626 to 1642 (GNSSGMSAMNTNTTSTT). Residues 1804–1821 (STCYKCGKADHNLRECKL) form a CCHC-type zinc finger.

It belongs to the helicase family. RecQ subfamily.

The enzyme catalyses Couples ATP hydrolysis with the unwinding of duplex DNA by translocating in the 3'-5' direction.. It catalyses the reaction ATP + H2O = ADP + phosphate + H(+). In terms of biological role, a probable ATP-dependent 3'-5' DNA helicase. Has a role in telomerase-independent telomere maintenance. This is ATP-dependent DNA helicase tlh1 from Schizosaccharomyces pombe (strain 972 / ATCC 24843) (Fission yeast).